A 324-amino-acid polypeptide reads, in one-letter code: DNA repair and recombination protein RadA (324 aa).

ATP is bound at residue 114 to 121 (GEFGSGKT).

The protein belongs to the eukaryotic RecA-like protein family.

Functionally, involved in DNA repair and in homologous recombination. Binds and assemble on single-stranded DNA to form a nucleoprotein filament. Hydrolyzes ATP in a ssDNA-dependent manner and promotes DNA strand exchange between homologous DNA molecules. This is DNA repair and recombination protein RadA from Metallosphaera sedula (strain ATCC 51363 / DSM 5348 / JCM 9185 / NBRC 15509 / TH2).